The primary structure comprises 690 residues: Elongation factor G (690 aa).

Residues 8–283 (SKCRNIGIMA…AVVDYLPSPN (276 aa)) enclose the tr-type G domain. GTP contacts are provided by residues 17 to 24 (AHIDAGKT), 81 to 85 (DTPGH), and 135 to 138 (NKMD).

This sequence belongs to the TRAFAC class translation factor GTPase superfamily. Classic translation factor GTPase family. EF-G/EF-2 subfamily.

It localises to the cytoplasm. Catalyzes the GTP-dependent ribosomal translocation step during translation elongation. During this step, the ribosome changes from the pre-translocational (PRE) to the post-translocational (POST) state as the newly formed A-site-bound peptidyl-tRNA and P-site-bound deacylated tRNA move to the P and E sites, respectively. Catalyzes the coordinated movement of the two tRNA molecules, the mRNA and conformational changes in the ribosome. The polypeptide is Elongation factor G (Anaplasma phagocytophilum (strain HZ)).